Here is a 300-residue protein sequence, read N- to C-terminus: Transcription factor E2F5 (300 aa).

A DNA-binding region spans residues 2-73 (GSSRHEKSLG…KNSIQWKGVG (72 aa)). Residues 31–53 (LKAAADTLAVRQKRRIYDITNVL) form a leucine-zipper region. Residues 36 to 73 (DTLAVRQKRRIYDITNVLEGIDLIEKKSKNSIQWKGVG) carry the DEF box motif. The dimerization stretch occupies residues 74–170 (AGCNTKEVID…GQNGQKKYQI (97 aa)). Positions 191–250 (SKPVVFPVPPPDDLTQPSSQSSTSVTPPKSTMAAQNLPEQHVSERSQNFQQTPATEISSG) are disordered. Over residues 203–221 (DLTQPSSQSSTSVTPPKST) the composition is skewed to low complexity. Positions 235–246 (RSQNFQQTPATE) are enriched in polar residues. The transactivation stretch occupies residues 242–300 (TPATEISSGSISGDIIDELMSSDVFPLLRLSPTPADDYNFNLDDNEGVCDLFDVQILNY). Residues 277–294 (DDYNFNLDDNEGVCDLFD) are RBL2 association.

This sequence belongs to the E2F/DP family. In terms of assembly, component of the DRTF1/E2F transcription factor complex. Binds cooperatively with DP-1 to E2F sites. Interaction with retinoblastoma protein RB1 or proteins RBL1 and RBL2 inhibits the E2F transactivation domain. Component of the DREAM complex (also named LINC complex) at least composed of E2F4, E2F5, LIN9, LIN37, LIN52, LIN54, MYBL1, MYBL2, RBL1, RBL2, RBBP4, TFDP1 and TFDP2. The complex exists in quiescent cells where it represses cell cycle-dependent genes. It dissociates in S phase when LIN9, LIN37, LIN52 and LIN54 form a subcomplex that binds to MYBL2. In terms of tissue distribution, found in placenta followed by kidney, lung and brain.

Its subcellular location is the nucleus. Functionally, transcriptional activator that binds to E2F sites, these sites are present in the promoter of many genes whose products are involved in cell proliferation. May mediate growth factor-initiated signal transduction. It is likely involved in the early responses of resting cells to growth factor stimulation. Specifically required for multiciliate cell differentiation: together with MCIDAS and E2F5, binds and activate genes required for centriole biogenesis. In Rattus norvegicus (Rat), this protein is Transcription factor E2F5 (E2f5).